The primary structure comprises 927 residues: DNA polymerase alpha-binding protein (927 aa).

WD repeat units lie at residues 10–49, 134–173, 227–266, and 273–313; these read FDFG…EEPE, KIDE…PNKV, AANR…LQKT, and STKA…IHYT. A phosphoserine mark is found at Ser377, Ser379, and Ser398. Residues Thr401 and Thr411 each carry the phosphothreonine modification. Ser463 carries the phosphoserine modification. One copy of the WD 5 repeat lies at 699–739; sequence GSDNTLLLLSKWRSPEESKWLPILDSNMEIWKMSGGKETTD.

It localises to the nucleus. Its function is as follows. Accessory factor for DNA replication. It plays a role in accurately duplicating the genome in vivo. The polypeptide is DNA polymerase alpha-binding protein (CTF4) (Saccharomyces cerevisiae (strain ATCC 204508 / S288c) (Baker's yeast)).